Here is a 146-residue protein sequence, read N- to C-terminus: Flavodoxin (146 aa).

One can recognise a Flavodoxin-like domain in the interval 4 to 143 (SLIVYGSTTG…EIVSWGSGIA (140 aa)).

This sequence belongs to the flavodoxin family. The cofactor is FMN.

Functionally, low-potential electron donor to a number of redox enzymes. This is Flavodoxin from Maridesulfovibrio salexigens (strain ATCC 14822 / DSM 2638 / NCIMB 8403 / VKM B-1763) (Desulfovibrio salexigens).